The chain runs to 503 residues: Cobyric acid synthase (503 aa).

Residues 251–450 enclose the GATase cobBQ-type domain; it reads DLDIAVIRLP…IHGIFENAAF (200 aa). Residue Cys-331 is the Nucleophile of the active site. His-442 is an active-site residue.

This sequence belongs to the CobB/CobQ family. CobQ subfamily.

It functions in the pathway cofactor biosynthesis; adenosylcobalamin biosynthesis. Functionally, catalyzes amidations at positions B, D, E, and G on adenosylcobyrinic A,C-diamide. NH(2) groups are provided by glutamine, and one molecule of ATP is hydrogenolyzed for each amidation. This is Cobyric acid synthase from Dehalococcoides mccartyi (strain CBDB1).